The primary structure comprises 313 residues: Ribosomal RNA small subunit methyltransferase H (313 aa).

S-adenosyl-L-methionine-binding positions include 35 to 37 (GGH), Asp55, Phe79, Asp101, and Gln108.

The protein belongs to the methyltransferase superfamily. RsmH family.

The protein localises to the cytoplasm. The catalysed reaction is cytidine(1402) in 16S rRNA + S-adenosyl-L-methionine = N(4)-methylcytidine(1402) in 16S rRNA + S-adenosyl-L-homocysteine + H(+). Its function is as follows. Specifically methylates the N4 position of cytidine in position 1402 (C1402) of 16S rRNA. The sequence is that of Ribosomal RNA small subunit methyltransferase H from Klebsiella pneumoniae (strain 342).